Consider the following 312-residue polypeptide: MEPLNRTEVSEFFLKGFSGYPALEHLLFPLCSAMYLVTLLGNTAIMAVSVLDIHLHTPVYFFLGNLSTLDICYTPTFVPLMLVHLLSSRKTISFAVCAIQMCLSLSTGSTECLLLAITAYDRYLAICQPLRYHVLMSHRLCVLLMGAAWVLCLLKSVTEMVISMRLPFCGHHVVSHFTCKILAVLKLACGNTSVSEDFLLAGSILLLPVPLAFICLSYLLILATILRVPSAARCCKAFSTCLAHLAVVLLFYGTIIFMYLKPKSKEAHISDEVFTVLYAMVTTMLNPTIYSLRNKEVKEAARKVWGRSRASR.

At 1-25 the chain is on the extracellular side; it reads MEPLNRTEVSEFFLKGFSGYPALEH. The N-linked (GlcNAc...) asparagine glycan is linked to Asn-5. Residues 26-46 form a helical membrane-spanning segment; the sequence is LLFPLCSAMYLVTLLGNTAIM. At 47–54 the chain is on the cytoplasmic side; that stretch reads AVSVLDIH. The helical transmembrane segment at 55-75 threads the bilayer; that stretch reads LHTPVYFFLGNLSTLDICYTP. Topologically, residues 76 to 99 are extracellular; it reads TFVPLMLVHLLSSRKTISFAVCAI. Cys-97 and Cys-189 are oxidised to a cystine. Residues 100 to 120 traverse the membrane as a helical segment; the sequence is QMCLSLSTGSTECLLLAITAY. Over 121-139 the chain is Cytoplasmic; it reads DRYLAICQPLRYHVLMSHR. Residues 140-160 form a helical membrane-spanning segment; the sequence is LCVLLMGAAWVLCLLKSVTEM. The Extracellular segment spans residues 161–197; the sequence is VISMRLPFCGHHVVSHFTCKILAVLKLACGNTSVSED. Asn-191 carries an N-linked (GlcNAc...) asparagine glycan. A helical transmembrane segment spans residues 198–217; sequence FLLAGSILLLPVPLAFICLS. Over 218-237 the chain is Cytoplasmic; it reads YLLILATILRVPSAARCCKA. Residues 238-258 form a helical membrane-spanning segment; it reads FSTCLAHLAVVLLFYGTIIFM. Over 259–271 the chain is Extracellular; sequence YLKPKSKEAHISD. A helical transmembrane segment spans residues 272-292; that stretch reads EVFTVLYAMVTTMLNPTIYSL. Over 293-312 the chain is Cytoplasmic; it reads RNKEVKEAARKVWGRSRASR.

This sequence belongs to the G-protein coupled receptor 1 family.

It is found in the cell membrane. In terms of biological role, odorant receptor. This Homo sapiens (Human) protein is Olfactory receptor 13J1 (OR13J1).